The sequence spans 97 residues: uncharacterized protein (97 aa).

This is an uncharacterized protein from Orgyia pseudotsugata multicapsid polyhedrosis virus (OpMNPV).